A 273-amino-acid polypeptide reads, in one-letter code: Transmembrane protein 45A (273 aa).

5 helical membrane passes run 8-27 (ALPGSFFFAMGFWWTMKNIL), 55-79 (VVVLLMSLTGIAGEQFISGGPALIL), 108-131 (IICFTTNVLPLSSSKLMLSIAIFV), 153-171 (LLVFVGTFSGLVAFLEFLV), and 217-236 (MFLSMCFCWHYASILILIGV).

Belongs to the TMEM45 family.

Its subcellular location is the membrane. This Mus musculus (Mouse) protein is Transmembrane protein 45A (Tmem45a).